The following is a 126-amino-acid chain: Aspartate 1-decarboxylase (126 aa).

Catalysis depends on serine 25, which acts as the Schiff-base intermediate with substrate; via pyruvic acid. Serine 25 carries the post-translational modification Pyruvic acid (Ser). Threonine 57 contributes to the substrate binding site. Tyrosine 58 (proton donor) is an active-site residue. Residue 73-75 (GAA) participates in substrate binding.

The protein belongs to the PanD family. Heterooctamer of four alpha and four beta subunits. Pyruvate serves as cofactor. Post-translationally, is synthesized initially as an inactive proenzyme, which is activated by self-cleavage at a specific serine bond to produce a beta-subunit with a hydroxyl group at its C-terminus and an alpha-subunit with a pyruvoyl group at its N-terminus.

It is found in the cytoplasm. The enzyme catalyses L-aspartate + H(+) = beta-alanine + CO2. It functions in the pathway cofactor biosynthesis; (R)-pantothenate biosynthesis; beta-alanine from L-aspartate: step 1/1. Catalyzes the pyruvoyl-dependent decarboxylation of aspartate to produce beta-alanine. The sequence is that of Aspartate 1-decarboxylase from Salmonella choleraesuis (strain SC-B67).